The primary structure comprises 245 residues: Eukaryotic translation initiation factor 6 (245 aa).

Y113 carries the post-translational modification Phosphotyrosine. At T165 the chain carries Phosphothreonine. S166 bears the Phosphoserine mark. Phosphoserine; by CK1 is present on residues S174 and S175. S235 is subject to Phosphoserine; by PKC. Phosphoserine is present on residues S239 and S243.

Belongs to the eIF-6 family. Monomer. Associates with the 60S ribosomal subunit. Interacts with RACK1. Interacts with DICER1, AGO2, TARBP2, MOV10 and RPL7A; they form a large RNA-induced silencing complex (RISC). Phosphorylation at Ser-174 and Ser-175 by CSNK1D/CK1 promotes nuclear export. Post-translationally, ufmylated by UFL1.

The protein localises to the cytoplasm. It is found in the nucleus. It localises to the nucleolus. Functionally, binds to the 60S ribosomal subunit and prevents its association with the 40S ribosomal subunit to form the 80S initiation complex in the cytoplasm. Behaves as a stimulatory translation initiation factor downstream insulin/growth factors. Is also involved in ribosome biogenesis. Associates with pre-60S subunits in the nucleus and is involved in its nuclear export. Cytoplasmic release of TIF6 from 60S subunits and nuclear relocalization is promoted by a RACK1 (RACK1)-dependent protein kinase C activity. In tissues responsive to insulin, controls fatty acid synthesis and glycolysis by exerting translational control of adipogenic transcription factors such as CEBPB, CEBPD and ATF4 that have G/C rich or uORF in their 5'UTR. Required for ROS-dependent megakaryocyte maturation and platelets formation, controls the expression of mitochondrial respiratory chain genes involved in reactive oxygen species (ROS) synthesis. Involved in miRNA-mediated gene silencing by the RNA-induced silencing complex (RISC). Required for both miRNA-mediated translational repression and miRNA-mediated cleavage of complementary mRNAs by RISC. Modulates cell cycle progression and global translation of pre-B cells, its activation seems to be rate-limiting in tumorigenesis and tumor growth. In Bos taurus (Bovine), this protein is Eukaryotic translation initiation factor 6.